A 655-amino-acid chain; its full sequence is p-hydroxybenzoic acid efflux pump subunit AaeB (655 aa).

The Periplasmic segment spans residues 1-12 (MDIFSIANQHIR). Residues 13 to 33 (FAVKLATAIVLALFVGFHFQL) traverse the membrane as a helical segment. Residues 34 to 37 (ETPR) lie on the Cytoplasmic side of the membrane. A helical transmembrane segment spans residues 38–58 (WAVLTAAIVAAGPAFAAGGEP). The Periplasmic segment spans residues 59–68 (YSGAIRYRGF). Residues 69-89 (LRIIGTFIGCIAGLVIIIAMI) form a helical membrane-spanning segment. Residues 90–92 (RAP) lie on the Cytoplasmic side of the membrane. A helical membrane pass occupies residues 93–113 (LLMILVCCIWAGFCTWISSLV). Over 114-120 (RIENSYA) the chain is Periplasmic. The helical transmembrane segment at 121-141 (WGLAGYTALIIVITIQPEPLL) threads the bilayer. Residues 142–151 (TPQFAVERCS) lie on the Cytoplasmic side of the membrane. The helical transmembrane segment at 152 to 172 (EIVIGIVCAIMADLLFSPRSI) threads the bilayer. Topologically, residues 173–369 (KQEVDRELES…RTTLSCILGT (197 aa)) are periplasmic. The helical transmembrane segment at 370–390 (LFWLWTGWTSGSGAMVMIAVV) threads the bilayer. The Cytoplasmic segment spans residues 391 to 406 (TSLAMRLPNPRMVAID). Residues 407 to 427 (FIYGTLAALPLGLLYFLVIIP) traverse the membrane as a helical segment. Residues 428-430 (NTQ) are Periplasmic-facing. A helical transmembrane segment spans residues 431-451 (QSMLLLCISLAVLGFFLGIEV). Residues 452–458 (QKRRLGS) are Cytoplasmic-facing. A helical membrane pass occupies residues 459 to 479 (MGALASTINIIVLDNPMTFHF). Residues 480–481 (SQ) are Periplasmic-facing. Residues 482–502 (FLDSALGQIVGCVLAFTVILL) traverse the membrane as a helical segment. Residues 503-655 (VRDKSRDRTG…HKYQHALTDS (153 aa)) lie on the Cytoplasmic side of the membrane.

The protein belongs to the aromatic acid exporter ArAE (TC 2.A.85) family.

The protein resides in the cell inner membrane. Its function is as follows. Forms an efflux pump with AaeA. Could function as a metabolic relief valve, allowing to eliminate certain compounds when they accumulate to high levels in the cell. This is p-hydroxybenzoic acid efflux pump subunit AaeB from Escherichia coli O157:H7.